A 209-amino-acid chain; its full sequence is NAD(P)H-quinone oxidoreductase subunit K 2 (209 aa).

Residues Cys53, Cys54, Cys118, and Cys149 each coordinate [4Fe-4S] cluster.

Belongs to the complex I 20 kDa subunit family. NDH-1 can be composed of about 15 different subunits; different subcomplexes with different compositions have been identified which probably have different functions. [4Fe-4S] cluster serves as cofactor.

The protein resides in the cellular thylakoid membrane. It carries out the reaction a plastoquinone + NADH + (n+1) H(+)(in) = a plastoquinol + NAD(+) + n H(+)(out). It catalyses the reaction a plastoquinone + NADPH + (n+1) H(+)(in) = a plastoquinol + NADP(+) + n H(+)(out). Its function is as follows. NDH-1 shuttles electrons from an unknown electron donor, via FMN and iron-sulfur (Fe-S) centers, to quinones in the respiratory and/or the photosynthetic chain. The immediate electron acceptor for the enzyme in this species is believed to be plastoquinone. Couples the redox reaction to proton translocation, and thus conserves the redox energy in a proton gradient. Cyanobacterial NDH-1 also plays a role in inorganic carbon-concentration. The sequence is that of NAD(P)H-quinone oxidoreductase subunit K 2 from Acaryochloris marina (strain MBIC 11017).